A 445-amino-acid polypeptide reads, in one-letter code: F-box protein At5g10340 (445 aa).

One can recognise an F-box domain in the interval 64-112; it reads SMEELLPHDVIEYHIMVRLDVKTLLKFKSVSKQWMSTIQSPSFQERQLI.

The sequence is that of F-box protein At5g10340 from Arabidopsis thaliana (Mouse-ear cress).